We begin with the raw amino-acid sequence, 253 residues long: Large ribosomal subunit protein uL4 (253 aa).

It belongs to the universal ribosomal protein uL4 family. In terms of assembly, part of the 50S ribosomal subunit.

One of the primary rRNA binding proteins, this protein initially binds near the 5'-end of the 23S rRNA. It is important during the early stages of 50S assembly. It makes multiple contacts with different domains of the 23S rRNA in the assembled 50S subunit and ribosome. Functionally, forms part of the polypeptide exit tunnel. This is Large ribosomal subunit protein uL4 from Methanococcoides burtonii (strain DSM 6242 / NBRC 107633 / OCM 468 / ACE-M).